Reading from the N-terminus, the 217-residue chain is Dihydroflavonol 4-reductase (217 aa).

Residues lysine 27 and tyrosine 146 each contribute to the NADP(+) site.

The protein belongs to the NAD(P)-dependent epimerase/dehydratase family. Dihydroflavonol-4-reductase subfamily.

The catalysed reaction is a (2R,3S,4S)-leucoanthocyanidin + NADP(+) = a (2R,3R)-dihydroflavonol + NADPH + H(+). It catalyses the reaction (2S)-flavan-4-ol + NADP(+) = (2S)-flavanone + NADPH + H(+). It participates in pigment biosynthesis; anthocyanin biosynthesis. Bifunctional enzyme involved in flavonoid metabolism. The sequence is that of Dihydroflavonol 4-reductase (DFR1) from Medicago sativa (Alfalfa).